The sequence spans 482 residues: QWRF motif-containing protein 3 (482 aa).

The segment covering 1–20 (MKSCEHELLKTRRGKSREVS) has biased composition (basic and acidic residues). Disordered stretches follow at residues 1–60 (MKSC…GLKK) and 171–220 (TAKP…QWAL). Over residues 21–42 (SRFLSSPSASSSPNRRNSTSNS) the composition is skewed to low complexity. Residues 191 to 219 (RTNSSKGIENRLQRNNSVSRYGSSMSQWA) are compositionally biased toward polar residues. The QWRF motif motif lies at 292-295 (QWRF).

The protein belongs to the QWRF family.

This is QWRF motif-containing protein 3 (QWRF3) from Arabidopsis thaliana (Mouse-ear cress).